The sequence spans 311 residues: Malate dehydrogenase (311 aa).

NAD(+)-binding positions include 7 to 13 and Asp34; that span reads GAAGGIG. Substrate is bound by residues Arg81 and Arg87. NAD(+) contacts are provided by residues Asn94 and 117–119; that span reads ITN. Residues Asn119 and Arg153 each coordinate substrate. The active-site Proton acceptor is the His177. Met227 is an NAD(+) binding site.

Belongs to the LDH/MDH superfamily. MDH type 1 family. Homodimer.

The enzyme catalyses (S)-malate + NAD(+) = oxaloacetate + NADH + H(+). In terms of biological role, catalyzes the reversible oxidation of malate to oxaloacetate. This is Malate dehydrogenase from Shewanella piezotolerans (strain WP3 / JCM 13877).